Here is a 272-residue protein sequence, read N- to C-terminus: STPAITLENPDIKYPLRLIDKEVVNHDTRRFRFALPSPEHILGLPVGQHIYLSARIDGNLVIRPYTPVSSDDDKGFVDLVIKVYFKDTHPKFPAGGKMSQYLESMKIGDTIEFRGPNGLLVYQGKGKFAIRPDKKSSPVIKTVKSVGMIAGGTGITPMLQVIRAIMKDPDDHTVCHLLFANQTEKDILLRPELEELRNEHSARFKLWYTVDRAPEAWDYSQGFVNEEMIRDHLPPPEEEPLVLMCGPPPMIQYACLPNLERVGHPKERCFAF.

Residues 11–123 (DIKYPLRLID…RGPNGLLVYQ (113 aa)) form the FAD-binding FR-type domain. Position 13 is an N6-acetyllysine (Lys13). Residue Tyr14 is modified to Phosphotyrosine. Lys21 carries the N6-acetyllysine modification. Positions 63, 64, 65, 80, 82, and 84 each coordinate FAD. The residue at position 91 (Lys91) is an N6-acetyllysine. Positions 97, 98, 99, and 156 each coordinate FAD.

This sequence belongs to the flavoprotein pyridine nucleotide cytochrome reductase family. In terms of assembly, component of a complex composed of cytochrome b5, NADH-cytochrome b5 reductase (CYB5R3) and MTARC2. Interacts with MTLN; the interaction is required to maintain cellular lipid composition and leads to stimulation of mitochondrial respiratory complex I activity. The cofactor is FAD.

The protein resides in the endoplasmic reticulum membrane. It localises to the mitochondrion outer membrane. The enzyme catalyses 2 Fe(III)-[cytochrome b5] + NADH = 2 Fe(II)-[cytochrome b5] + NAD(+) + H(+). Its function is as follows. Catalyzes the reduction of two molecules of cytochrome b5 using NADH as the electron donor. The chain is NADH-cytochrome b5 reductase 3 (CYB5R3) from Sus scrofa (Pig).